The chain runs to 731 residues: 1,4-alpha-glucan branching enzyme GlgB (731 aa).

The Nucleophile role is filled by Asp-412. The Proton donor role is filled by Glu-465.

It belongs to the glycosyl hydrolase 13 family. GlgB subfamily. In terms of assembly, monomer.

The catalysed reaction is Transfers a segment of a (1-&gt;4)-alpha-D-glucan chain to a primary hydroxy group in a similar glucan chain.. The protein operates within glycan biosynthesis; glycogen biosynthesis. Functionally, catalyzes the formation of the alpha-1,6-glucosidic linkages in glycogen by scission of a 1,4-alpha-linked oligosaccharide from growing alpha-1,4-glucan chains and the subsequent attachment of the oligosaccharide to the alpha-1,6 position. The polypeptide is 1,4-alpha-glucan branching enzyme GlgB (Bordetella bronchiseptica (strain ATCC BAA-588 / NCTC 13252 / RB50) (Alcaligenes bronchisepticus)).